Here is a 244-residue protein sequence, read N- to C-terminus: DnaJ homolog subfamily C member 4 (244 aa).

A J domain is found at 37–102 (NYYELLGVHP…ESRRNYDHQL (66 aa)). Positions 96-127 (RNYDHQLHSASPPKSSGSTAEPKYTQQTHSSW) are disordered. The span at 103–127 (HSASPPKSSGSTAEPKYTQQTHSSW) shows a compositional bias: polar residues. Residues 159 to 178 (VLGYCLLLMVAGMGLHYVAF) traverse the membrane as a helical segment. The interval 208–244 (RANRARIQQERQQRQQPRAEPSLPPESSRIMPQDTSP) is disordered.

Its subcellular location is the membrane. In Mus musculus (Mouse), this protein is DnaJ homolog subfamily C member 4 (Dnajc4).